Here is a 388-residue protein sequence, read N- to C-terminus: uncharacterized protein (388 aa).

8 helical membrane-spanning segments follow: residues 15–37, 97–119, 129–151, 158–175, 179–196, 203–225, 304–326, and 347–369; these read VISA…LLVL, GFSK…VVFY, PIWG…TFLL, FIYI…FLSA, MMLA…VLFK, LAFW…YLSQ, IFIV…YIYF, and LLSV…DALL.

Its subcellular location is the cell membrane. This is an uncharacterized protein from Aquifex aeolicus (strain VF5).